The following is a 513-amino-acid chain: Melianol synthase CYP71BQ4 (513 aa).

The helical transmembrane segment at 10-30 threads the bilayer; that stretch reads MLHLPSLPVLLSFLLFLLMLI. Cysteine 451 serves as a coordination point for heme.

This sequence belongs to the cytochrome P450 family. Heme is required as a cofactor. As to expression, accumulates in mature fruits and in juice vesicles.

It is found in the membrane. It catalyses the reaction dihydroniloticin + 2 reduced [NADPH--hemoprotein reductase] + 2 O2 = melianol + 2 oxidized [NADPH--hemoprotein reductase] + 3 H2O + 2 H(+). Its pathway is secondary metabolite biosynthesis; terpenoid biosynthesis. Its function is as follows. Monooxygenase involved in the biosynthesis of limonoids triterpene natural products such as limonin, a compound with insecticidal activity responsible for the bitter taste in citrus. Catalyzes the conversion of dihydroniloticin to the protolimonoid melianol. This chain is Melianol synthase CYP71BQ4, found in Citrus sinensis (Sweet orange).